The sequence spans 90 residues: RNA-binding protein Hfq (90 aa).

The region spanning D10–L70 is the Sm domain.

This sequence belongs to the Hfq family. As to quaternary structure, homohexamer.

RNA chaperone that binds small regulatory RNA (sRNAs) and mRNAs to facilitate mRNA translational regulation in response to envelope stress, environmental stress and changes in metabolite concentrations. Also binds with high specificity to tRNAs. This is RNA-binding protein Hfq from Symbiobacterium thermophilum (strain DSM 24528 / JCM 14929 / IAM 14863 / T).